Consider the following 607-residue polypeptide: Probable LRR receptor-like serine/threonine-protein kinase At5g65240 (607 aa).

The signal sequence occupies residues 1-24; that stretch reads MALLIITALVFSSLWSSVSPDAQG. Over 25–219 the chain is Extracellular; sequence DALFALRSSL…SGDSSSRKTG (195 aa). N-linked (GlcNAc...) asparagine glycosylation is found at N74 and N110. LRR repeat units lie at residues 87 to 111, 112 to 135, 137 to 159, and 160 to 183; these read LTTL…IGNL, SSLT…LGNL, NLQF…LTGL, and SKLI…LFKI. N149, N171, N187, and N192 each carry an N-linked (GlcNAc...) asparagine glycan. The helical transmembrane segment at 220–240 threads the bilayer; that stretch reads IIAGVVSGIAVILLGFFFFFF. Residues 241–607 are Cytoplasmic-facing; it reads CKDKHKGYKR…QDAIELSGGR (367 aa). The residue at position 281 (T281) is a Phosphothreonine. Residues 284-568 form the Protein kinase domain; that stretch reads FSEKNVLGQG…EGEGLAERWE (285 aa). Residue 290 to 298 participates in ATP binding; that stretch reads LGQGGFGKV. At T307 the chain carries Phosphothreonine. K312 serves as a coordination point for ATP. At S365 the chain carries Phosphoserine. D411 functions as the Proton acceptor in the catalytic mechanism. 3 positions are modified to phosphothreonine: T444, T445, and T450. S460 carries the phosphoserine modification. At T461 the chain carries Phosphothreonine. S465 carries the post-translational modification Phosphoserine. At T541 the chain carries Phosphothreonine.

The protein belongs to the protein kinase superfamily. Ser/Thr protein kinase family.

The protein resides in the cell membrane. The enzyme catalyses L-seryl-[protein] + ATP = O-phospho-L-seryl-[protein] + ADP + H(+). The catalysed reaction is L-threonyl-[protein] + ATP = O-phospho-L-threonyl-[protein] + ADP + H(+). This is Probable LRR receptor-like serine/threonine-protein kinase At5g65240 from Arabidopsis thaliana (Mouse-ear cress).